The sequence spans 474 residues: Pyruvate kinase (474 aa).

A substrate-binding site is contributed by Arg37. Asn39, Ser41, and Asp71 together coordinate K(+). ATP is bound at residue 39–42; the sequence is NFSH. Residues Arg78 and Lys160 each coordinate ATP. Glu222 is a Mg(2+) binding site. Positions 245, 246, and 278 each coordinate substrate. Position 246 (Asp246) interacts with Mg(2+).

This sequence belongs to the pyruvate kinase family. Homotetramer. Mg(2+) is required as a cofactor. K(+) serves as cofactor.

The enzyme catalyses pyruvate + ATP = phosphoenolpyruvate + ADP + H(+). The protein operates within carbohydrate degradation; glycolysis; pyruvate from D-glyceraldehyde 3-phosphate: step 5/5. The sequence is that of Pyruvate kinase (ttuE) from Agrobacterium vitis (Rhizobium vitis).